A 55-amino-acid chain; its full sequence is Large ribosomal subunit protein bL33 (55 aa).

The protein belongs to the bacterial ribosomal protein bL33 family.

The chain is Large ribosomal subunit protein bL33 from Cereibacter sphaeroides (strain ATCC 17029 / ATH 2.4.9) (Rhodobacter sphaeroides).